A 368-amino-acid chain; its full sequence is MTTLNSTPRADGFHMPAEWAPQTQVWMVWPERPDNWRLGGKPAQAAHVAIAKAIARFEPVTVAVSAAQYDNARARLDVPNIRVVEMSSNDAWVRDSGPTFVINERGEVRGVNWEFNAWGGFDGGLYAPWNLDSQLGSKVLEIERCPRYVTKGFVLEGGSIHVDGEGTLITTEECLLNRNRNPHLTREQIEAILGDYLAVDKVVWLPDGLFNDETDGHVDNFCCYIRPGEVLLAWTDDPEDPNYSRCHAALGILENTLDAKGRAFIVHKMPIPGPLFATEEECAGVDQVHGSQERNPSVRLAGSYVNFLIVNGGIIAPSFDDPMDEKARELLQTLFPEHEVVMAPGRELLLGGGNIHCLTQQQPAPHKA.

Cysteine 357 functions as the Amidino-cysteine intermediate in the catalytic mechanism.

This sequence belongs to the agmatine deiminase family. As to quaternary structure, homodimer.

The catalysed reaction is agmatine + H2O = N-carbamoylputrescine + NH4(+). The protein operates within amine and polyamine biosynthesis; putrescine biosynthesis via agmatine pathway; N-carbamoylputrescine from agmatine: step 1/1. Its function is as follows. Mediates the hydrolysis of agmatine into N-carbamoylputrescine in the arginine decarboxylase (ADC) pathway of putrescine biosynthesis, a basic polyamine. The chain is Agmatine deiminase from Pseudomonas savastanoi pv. phaseolicola (strain 1448A / Race 6) (Pseudomonas syringae pv. phaseolicola (strain 1448A / Race 6)).